Reading from the N-terminus, the 80-residue chain is MLSLQILAIVALVVAAIIAIVVWSIVFIEYRKILRQRKIDRLIDRIREREEDSGNESEGDQEELAALERGHLAPWDVDDL.

Over 1–7 (MLSLQIL) the chain is Extracellular. A helical membrane pass occupies residues 8–28 (AIVALVVAAIIAIVVWSIVFI). At 29–80 (EYRKILRQRKIDRLIDRIREREEDSGNESEGDQEELAALERGHLAPWDVDDL) the chain is on the cytoplasmic side. The tract at residues 49 to 80 (REEDSGNESEGDQEELAALERGHLAPWDVDDL) is disordered. Phosphoserine; by host CK2 is present on residues Ser53 and Ser57. The span at 53–65 (SGNESEGDQEELA) shows a compositional bias: acidic residues.

It belongs to the HIV-1 VPU protein family. Homopentamer. Interacts with host CD4 and BRTC; these interactions induce proteasomal degradation of CD4. Interacts with host BST2; this interaction leads to the degradation of host BST2. Interacts with host FBXW11. Interacts with host AP1M1; this interaction plays a role in the mistrafficking and subsequent degradation of host BST2. Interacts with host RANBP2; this interaction allows Vpu to down-regulate host BLM sumoylation. Post-translationally, phosphorylated by host CK2. This phosphorylation is necessary for interaction with human BTRC and degradation of CD4.

The protein resides in the host membrane. With respect to regulation, ion channel activity is inhibited by hexamethylene amiloride in vitro. Functionally, enhances virion budding by targeting host CD4 and Tetherin/BST2 to proteasome degradation. Degradation of CD4 prevents any unwanted premature interactions between viral Env and its host receptor CD4 in the endoplasmic reticulum. Degradation of antiretroviral protein Tetherin/BST2 is important for virion budding, as BST2 tethers new viral particles to the host cell membrane. Mechanistically, Vpu bridges either CD4 or BST2 to BTRC, a substrate recognition subunit of the Skp1/Cullin/F-box protein E3 ubiquitin ligase, induces their ubiquitination and subsequent proteasomal degradation. The alteration of the E3 ligase specificity by Vpu seems to promote the degradation of host IKBKB, leading to NF-kappa-B down-regulation and subsequent apoptosis. Acts as a viroporin that forms an oligomeric ion channel in membranes. Modulates the host DNA repair mechanisms to promote degradation of nuclear viral cDNA in cells that are already productively infected in order to suppress immune sensing and proviral hyper-integration (superinfection). Manipulates PML-NBs and modulates SUMOylation of host BLM protein thereby enhancing its DNA-end processing activity toward viral unintegrated linear DNA. Also inhibits RAD52-mediated homologous repair of viral cDNA, preventing the generation of dead-end circular forms of single copies of the long terminal repeat and permitting sustained nucleolytic attack. The protein is Protein Vpu of Human immunodeficiency virus type 1 group M subtype B (strain 89.6) (HIV-1).